Reading from the N-terminus, the 352-residue chain is Minor capsid protein VP2 (352 aa).

The N-myristoyl glycine; by host moiety is linked to residue glycine 2. Positions 273-308 (SGEFIEKFEAPGGANQRTAPQWMLPLLLGLYGSVTS) are D1. A helical membrane pass occupies residues 290–310 (TAPQWMLPLLLGLYGSVTSAL). The disordered stretch occupies residues 313–352 (YEDGPNKKKRKLSRGSSQKTKGTSASAKARHKRRNRSSRS). Positions 313–352 (YEDGPNKKKRKLSRGSSQKTKGTSASAKARHKRRNRSSRS) are DNA-binding. Residues 316 to 324 (GPNKKKRKL) carry the Nuclear localization signal motif. Residues 326-338 (RGSSQKTKGTSAS) show a composition bias toward polar residues. A compositionally biased stretch (basic residues) spans 340-352 (KARHKRRNRSSRS).

Belongs to the polyomaviruses capsid protein VP2 family. Forms homooligomers, and heterooligomers with VP3 in the endoplasmic reticulum membrane. Interacts (via D1 domain) with VP1. As to quaternary structure, interacts (via D1 domain) with VP1. Interacts (via C-terminus) with host SP1, this is probably also the case for VP2; this interaction represses SP1 activation of the SV40 early promoter and participates in virion assembly. Interacts (via nuclear localization signal) with host importin alpha2-beta heterodimer. In terms of assembly, oligomerizes with VP3 in the nucleus.

The protein resides in the virion. The protein localises to the host nucleus. Its subcellular location is the host endoplasmic reticulum. It is found in the host endoplasmic reticulum membrane. In terms of biological role, structural protein that resides within the core of the capsid surrounded by 72 VP1 pentamers. Following virus endocytosis and trafficking to the endoplasmic reticulum, VP2 and VP3 form oligomers and integrate into the endoplasmic reticulum membrane. Heterooligomer VP2-VP3 may create a viroporin for transporting the viral genome across the endoplasmic reticulum membrane to the cytoplasm. Nuclear entry of the viral DNA involves the selective exposure and importin recognition of VP2 or VP3 nuclear localization signal (shared C-terminus). Plays a role in virion assembly within the nucleus in particular through a DNA-binding domain located in the C-terminal region. An N-terminal myristoylation suggests a scaffold function for virion assembly. The viral progenies exit the cells by lytic release. Isoform VP2 may repress SP1 activation of the SV40 early promoter, via specific protein-protein and protein-DNA interactions. Structural protein that resides within the core of the capsid surrounded by 72 VP1 pentamers. Following virus entry, VP2 and VP3 form oligomers and integrate into the endoplasmic reticulum membrane. Heterooligomer VP2-VP3 may create a viroporin for transporting the viral genome across the endoplasmic reticulum membrane. Essential for focus formation and virus endoplasmic reticulum-to-cytosol membrane transport, required to recruit selective cellular components to the foci in the ER membrane. Nuclear entry of the viral DNA involves the selective exposure and importin recognition of VP2 or VP3 nuclear localization signal (shared C-terminus). Isoform VP3 represses SP1 activation of the SV40 early promoter, via specific protein-protein and protein-DNA interactions. SP1 additionally participates in recruiting VP3 to the SV40 minichromosome during SV40 assembly. Plays a role in virion assembly within the nucleus. May initiate host cell lysis when associated with VP4. Functionally, viroporin inducing perforation of cellular membranes to trigger virus progeny release. Forms pores of 3 nm inner diameter. VP4 is expressed about 24 hours after the late structural proteins and is not incorporated into the mature virion. In Simian virus 40 (SV40), this protein is Minor capsid protein VP2.